Consider the following 323-residue polypeptide: Aquaporin-4 (323 aa).

The Cytoplasmic portion of the chain corresponds to 1 to 36 (MSDGAAARRWGKCGHSCSRESIMVAFKGVWTQAFWK). 2 S-palmitoyl cysteine lipidation sites follow: Cys13 and Cys17. Residues 37 to 57 (AVSAEFLATLIFVLLGVGSTI) form a helical membrane-spanning segment. Residues 58–69 (NWGGSENPLPVD) lie on the Extracellular side of the membrane. Residues 70–89 (MVLISLCFGLSIATMVQCFG) form a helical membrane-spanning segment. Topologically, residues 90-93 (HISG) are cytoplasmic. Residues 94-101 (GHINPAVT) constitute an intramembrane region (discontinuously helical). An NPA 1 motif is present at residues 97–99 (NPA). The Cytoplasmic portion of the chain corresponds to 102 to 115 (VAMVCTRKISIAKS). A Phosphoserine; by PKG modification is found at Ser111. Residues 116–136 (VFYIIAQCLGAIIGAGILYLV) form a helical membrane-spanning segment. Residues 137–155 (TPPSVVGGLGVTTVHGNLT) are Extracellular-facing. N-linked (GlcNAc...) asparagine glycosylation is present at Asn153. Residues 156-176 (AGHGLLVELIITFQLVFTIFA) traverse the membrane as a helical segment. Topologically, residues 177–184 (SCDSKRTD) are cytoplasmic. Residue Ser180 is modified to Phosphoserine; by PKC. The chain crosses the membrane as a helical span at residues 185 to 205 (VTGSIALAIGFSVAIGHLFAI). Asn206 is a glycosylation site (N-linked (GlcNAc...) asparagine). Topologically, residues 206–208 (NYT) are extracellular. The segment at residues 209–222 (GASMNPARSFGPAV) is an intramembrane region (discontinuously helical). The short motif at 213 to 215 (NPA) is the NPA 2 element. The Extracellular segment spans residues 223-231 (IMGNWANHW). Residues 232–252 (IYWVGPIMGAVLAGALYEYVF) traverse the membrane as a helical segment. Residues 253–323 (CPDVELKRRL…DSSGEVLSSV (71 aa)) are Cytoplasmic-facing. 2 positions are modified to phosphoserine: Ser276 and Ser285. Thr289 carries the phosphothreonine modification. The residue at position 321 (Ser321) is a Phosphoserine.

It belongs to the MIP/aquaporin (TC 1.A.8) family. Homotetramer. The tetramers can form oligomeric arrays in membranes. The size of the oligomers differs between tissues and is smaller in skeletal muscle than in brain. Interaction between AQP4 oligomeric arrays in close-by cells can contribute to cell-cell adhesion. Part of a complex containing MLC1, TRPV4, HEPACAM and ATP1B1. Phosphorylation by PKC at Ser-180 reduces conductance by 50%. Phosphorylation by PKG at Ser-111 in response to glutamate increases conductance by 40%; this increase is not due to increased presence at the cell membrane. In terms of processing, isoform 2: Palmitoylated on its N-terminal region. Isoform 1: Not palmitoylated. In terms of tissue distribution, detected in brain cortex, especially around cortical blood vessels, and subjacent to pia, with lower levels in parenchymal membranes. Detected in ependymal and astroglial cells in brain. Detected in supporting Hensen's cells, inner sulcus cells and Claudius cells in the inner ear. Detected in skeletal muscle. Detected in gastric parietal cells. Detected in principal cells in collecting ducts in kidney medulla (at protein level). Detected in brain, heart and skeletal muscle.

The protein localises to the cell membrane. Its subcellular location is the basolateral cell membrane. It is found in the endosome membrane. It localises to the sarcolemma. The protein resides in the cell projection. It carries out the reaction H2O(in) = H2O(out). Functionally, forms a water-specific channel. Plays an important role in brain water homeostasis and in glymphatic solute transport. Required for a normal rate of water exchange across the blood brain interface. Required for normal levels of cerebrospinal fluid influx into the brain cortex and parenchyma along paravascular spaces that surround penetrating arteries, and for normal drainage of interstitial fluid along paravenous drainage pathways. Thereby, it is required for normal clearance of solutes from the brain interstitial fluid, including soluble beta-amyloid peptides derived from APP. Plays a redundant role in urinary water homeostasis and urinary concentrating ability. This Mus musculus (Mouse) protein is Aquaporin-4 (Aqp4).